The chain runs to 271 residues: Tryptophan synthase alpha chain (271 aa).

Catalysis depends on proton acceptor residues Glu56 and Asp67.

This sequence belongs to the TrpA family. In terms of assembly, tetramer of two alpha and two beta chains.

The enzyme catalyses (1S,2R)-1-C-(indol-3-yl)glycerol 3-phosphate + L-serine = D-glyceraldehyde 3-phosphate + L-tryptophan + H2O. The protein operates within amino-acid biosynthesis; L-tryptophan biosynthesis; L-tryptophan from chorismate: step 5/5. The alpha subunit is responsible for the aldol cleavage of indoleglycerol phosphate to indole and glyceraldehyde 3-phosphate. The polypeptide is Tryptophan synthase alpha chain (Mycolicibacterium paratuberculosis (strain ATCC BAA-968 / K-10) (Mycobacterium paratuberculosis)).